A 137-amino-acid chain; its full sequence is Cell division protein SepF (137 aa).

Belongs to the SepF family. In terms of assembly, homodimer. Interacts with FtsZ.

The protein localises to the cytoplasm. Functionally, cell division protein that is part of the divisome complex and is recruited early to the Z-ring. Probably stimulates Z-ring formation, perhaps through the cross-linking of FtsZ protofilaments. Its function overlaps with FtsA. The sequence is that of Cell division protein SepF from Thermoanaerobacter pseudethanolicus (strain ATCC 33223 / 39E) (Clostridium thermohydrosulfuricum).